We begin with the raw amino-acid sequence, 1003 residues long: UPF0182 protein Mkms_1433 (1003 aa).

7 consecutive transmembrane segments (helical) span residues Val18–Asp38, Val63–Leu83, Leu114–Tyr134, Phe176–Ile196, Ile211–Asp231, Lys260–Leu280, and Ile288–Val308. A compositionally biased stretch (low complexity) spans Ala902–Ala937. The tract at residues Ala902 to Ser979 is disordered.

It belongs to the UPF0182 family.

It localises to the cell membrane. This Mycobacterium sp. (strain KMS) protein is UPF0182 protein Mkms_1433.